The primary structure comprises 271 residues: Urease accessory protein UreD (271 aa).

This sequence belongs to the UreD family. UreD, UreF and UreG form a complex that acts as a GTP-hydrolysis-dependent molecular chaperone, activating the urease apoprotein by helping to assemble the nickel containing metallocenter of UreC. The UreE protein probably delivers the nickel.

It localises to the cytoplasm. Required for maturation of urease via the functional incorporation of the urease nickel metallocenter. The polypeptide is Urease accessory protein UreD (Haemophilus influenzae (strain 86-028NP)).